Reading from the N-terminus, the 328-residue chain is tRNA dimethylallyltransferase (328 aa).

10–17 (GPTASGKT) contacts ATP. 12–17 (TASGKT) lines the substrate pocket.

The protein belongs to the IPP transferase family. In terms of assembly, monomer. Mg(2+) is required as a cofactor.

The enzyme catalyses adenosine(37) in tRNA + dimethylallyl diphosphate = N(6)-dimethylallyladenosine(37) in tRNA + diphosphate. Its function is as follows. Catalyzes the transfer of a dimethylallyl group onto the adenine at position 37 in tRNAs that read codons beginning with uridine, leading to the formation of N6-(dimethylallyl)adenosine (i(6)A). The sequence is that of tRNA dimethylallyltransferase from Bifidobacterium longum subsp. infantis (strain ATCC 15697 / DSM 20088 / JCM 1222 / NCTC 11817 / S12).